The primary structure comprises 283 residues: MMTYWPSPAKLNLFLYITGQRADGYHTLQTLFQFLDYGDTLHIEPRRDGEIHLLTPVNGVENEDNLIVRAARGLMKAALESGRLPAGSGADISIEKRLPMGGGLGGGSSNAATVLVALNHLWQCGLSVDELAKLGLTLGADVPVFVRGHAAFAEGVGEILTPVNPPEKWYLVAHPGVIIPTPVIFKDPQLPRNTPKRSIDTLLKCEFSNDCEVIARKRFREVDAALSWLLEYAPSRLTGTGACVFAEFDTEPCARQVLEQAPEWLNAFVAKGVNLSPLHRSLL.

The active site involves Lys10. 99-109 (PMGGGLGGGSS) is a binding site for ATP. Asp141 is an active-site residue.

Belongs to the GHMP kinase family. IspE subfamily. As to quaternary structure, homodimer.

It catalyses the reaction 4-CDP-2-C-methyl-D-erythritol + ATP = 4-CDP-2-C-methyl-D-erythritol 2-phosphate + ADP + H(+). It functions in the pathway isoprenoid biosynthesis; isopentenyl diphosphate biosynthesis via DXP pathway; isopentenyl diphosphate from 1-deoxy-D-xylulose 5-phosphate: step 3/6. Its function is as follows. Catalyzes the phosphorylation of the position 2 hydroxy group of 4-diphosphocytidyl-2C-methyl-D-erythritol. This is 4-diphosphocytidyl-2-C-methyl-D-erythritol kinase from Salmonella arizonae (strain ATCC BAA-731 / CDC346-86 / RSK2980).